Consider the following 492-residue polypeptide: Auxin transporter-like protein 1 (492 aa).

The Cytoplasmic portion of the chain corresponds to 1 to 67 (MVPREQAEEA…DAWFSCASNQ (67 aa)). A helical transmembrane segment spans residues 68–85 (VAQVLLTLPYSFSQLGML). At 86–87 (SG) the chain is on the extracellular side. Residues 88–108 (VLLQLFYGFMGSWTAYLISVL) form a helical membrane-spanning segment. At 109-143 (YVEYRSRKEKEGVSFKNHVIQWFEVLDGLLGPYWK) the chain is on the cytoplasmic side. The chain crosses the membrane as a helical span at residues 144–164 (AAGLAFNCTFLLFGSVIQLIA). Residues 165-180 (CASNIYYINDRLDKRT) are Extracellular-facing. A helical membrane pass occupies residues 181 to 201 (WTYIFGACCATTVFIPSFHNY). Residue Arg202 is a topological domain, cytoplasmic. A helical transmembrane segment spans residues 203 to 223 (IWSFLGLGMTTYTAWYLAIAA). Residues 224–240 (LLNGQAEGITHTGPTKL) are Extracellular-facing. Residues 241 to 261 (VLYFTGATNILYTFGGHAVTV) form a helical membrane-spanning segment. The Cytoplasmic portion of the chain corresponds to 262–274 (EIMHAMWKPAKFK). The chain crosses the membrane as a helical span at residues 275–295 (YIYLLATLYVFTLTLPSASAM). The Extracellular segment spans residues 296–322 (YWAFGDELLTHSNAFSLLPKTGWRDAA). Residues 323 to 343 (VILMLIHQFITFGFACTPLYF) traverse the membrane as a helical segment. Residues 344-364 (VWEKVIGMHDTKSICLRALAR) are Cytoplasmic-facing. A helical membrane pass occupies residues 365 to 385 (LPIVVPIWFLAIIFPFFGPIN). Residue Ser386 is a topological domain, extracellular. The chain crosses the membrane as a helical span at residues 387-407 (AVGALLVSFTVYIIPALAHIL). Residues 408–432 (TYRTASARMNAAEKPPFFLPSWTGM) lie on the Cytoplasmic side of the membrane. A helical transmembrane segment spans residues 433–453 (FVLNMFIVVWVLVVGFGLGGW). The Extracellular segment spans residues 454-492 (ASMVNFIRQIDTFGLFAKCYQCPKPAPALAQSPVPLPHH).

Belongs to the amino acid/polyamine transporter 2 family. Amino acid/auxin permease (AAAP) (TC 2.A.18.1) subfamily.

The protein resides in the cell membrane. In terms of biological role, carrier protein involved in proton-driven auxin influx. May mediate the formation of auxin gradient from developing leaves (site of auxin biosynthesis) to tips. In Oryza sativa subsp. japonica (Rice), this protein is Auxin transporter-like protein 1.